We begin with the raw amino-acid sequence, 56 residues long: Ferredoxin (56 aa).

4Fe-4S ferredoxin-type domains are found at residues 2–29 (AYVINDSCISCGACEPECPVNAITAGDD) and 29–56 (DKYVIDAATCIDCGACAGVCPVDAPQPE). Cysteine 9, cysteine 12, cysteine 15, cysteine 19, cysteine 38, cysteine 41, cysteine 44, and cysteine 48 together coordinate [4Fe-4S] cluster.

Requires [4Fe-4S] cluster as cofactor.

In terms of biological role, ferredoxins are iron-sulfur proteins that transfer electrons in a wide variety of metabolic reactions. This is Ferredoxin from Acetoanaerobium sticklandii (strain ATCC 12662 / DSM 519 / JCM 1433 / CCUG 9281 / NCIMB 10654 / HF) (Clostridium sticklandii).